The chain runs to 208 residues: 3-demethoxyubiquinol 3-hydroxylase (208 aa).

Residues E57, E87, H90, E139, E171, and H174 each coordinate Fe cation.

It belongs to the COQ7 family. Requires Fe cation as cofactor.

Its subcellular location is the cell membrane. The catalysed reaction is a 5-methoxy-2-methyl-3-(all-trans-polyprenyl)benzene-1,4-diol + AH2 + O2 = a 3-demethylubiquinol + A + H2O. Its pathway is cofactor biosynthesis; ubiquinone biosynthesis. Functionally, catalyzes the hydroxylation of 2-nonaprenyl-3-methyl-6-methoxy-1,4-benzoquinol during ubiquinone biosynthesis. The protein is 3-demethoxyubiquinol 3-hydroxylase of Nitrosomonas eutropha (strain DSM 101675 / C91 / Nm57).